The following is a 104-amino-acid chain: Large ribosomal subunit protein bL21 (104 aa).

The protein belongs to the bacterial ribosomal protein bL21 family. In terms of assembly, part of the 50S ribosomal subunit. Contacts protein L20.

Functionally, this protein binds to 23S rRNA in the presence of protein L20. In Pseudomonas putida (strain W619), this protein is Large ribosomal subunit protein bL21.